The primary structure comprises 361 residues: Cyclic AMP receptor-like protein C (361 aa).

At 1–18 (MGIEESQICNPSDREFLS) the chain is on the extracellular side. Residues 19–39 (VDILNIVTSSLSLMGSALTII) form a helical membrane-spanning segment. The Cytoplasmic portion of the chain corresponds to 40–113 (SYIWKKVRRH…HGTYKQPTSK (74 aa)). The helical transmembrane segment at 114–134 (LPLLIFMLSIADFFTSFFIII) threads the bilayer. Residues 135–166 (SQSYLINNSKSYSTPYSPDLKIHFSPCIILRA) lie on the Extracellular side of the membrane. Residues 167-187 (IIQFFFLSTFFWTTCISYYLF) form a helical membrane-spanning segment. The Cytoplasmic portion of the chain corresponds to 188–197 (HQLSSPGEEK). Residues 198 to 218 (YLLAIFNVVSWGIPFAISMVI) form a helical membrane-spanning segment. At 219 to 238 (TMTNSIVVNSDGWCEVAKPM) the chain is on the extracellular side. Residues 239–259 (ELSLWFLPLFLCLLVCSIYYF) form a helical membrane-spanning segment. Topologically, residues 260–292 (RLRRLFRSKFEYRLQINDRLKQLDSTISRRLTL) are cytoplasmic. Residues 293 to 313 (YIVVFVICWLPDVIQHFISFF) traverse the membrane as a helical segment. Over 314–318 (SKCTF) the chain is Extracellular. A helical transmembrane segment spans residues 319 to 339 (FPLLILQNILTPSQGFWNFWI). Residues 340–361 (YSYTNKIARFTPSNDENKRLLQ) lie on the Cytoplasmic side of the membrane.

This sequence belongs to the G-protein coupled receptor 5 family.

It is found in the membrane. Functionally, receptor for cAMP. This Dictyostelium discoideum (Social amoeba) protein is Cyclic AMP receptor-like protein C (crlC).